Reading from the N-terminus, the 310-residue chain is HPr kinase/phosphorylase (310 aa).

Residues H136 and K157 contribute to the active site. Residue 151 to 158 (GDSGIGKS) participates in ATP binding. Residue S158 coordinates Mg(2+). Residue D175 is the Proton acceptor; for phosphorylation activity. Proton donor; for dephosphorylation activity of the active site. The interval 199–208 (LEIRGLGIIN) is important for the catalytic mechanism of both phosphorylation and dephosphorylation. E200 provides a ligand contact to Mg(2+). Residue R241 is part of the active site. The tract at residues 262-267 (PVRPGR) is important for the catalytic mechanism of dephosphorylation.

This sequence belongs to the HPrK/P family. As to quaternary structure, homohexamer. Requires Mg(2+) as cofactor.

The enzyme catalyses [HPr protein]-L-serine + ATP = [HPr protein]-O-phospho-L-serine + ADP + H(+). The catalysed reaction is [HPr protein]-O-phospho-L-serine + phosphate + H(+) = [HPr protein]-L-serine + diphosphate. Functionally, catalyzes the ATP- as well as the pyrophosphate-dependent phosphorylation of a specific serine residue in HPr, a phosphocarrier protein of the phosphoenolpyruvate-dependent sugar phosphotransferase system (PTS). HprK/P also catalyzes the pyrophosphate-producing, inorganic phosphate-dependent dephosphorylation (phosphorolysis) of seryl-phosphorylated HPr (P-Ser-HPr). The two antagonistic activities of HprK/P are regulated by several intracellular metabolites, which change their concentration in response to the absence or presence of rapidly metabolisable carbon sources (glucose, fructose, etc.) in the growth medium. Therefore, by controlling the phosphorylation state of HPr, HPrK/P is a sensor enzyme that plays a major role in the regulation of carbon metabolism and sugar transport: it mediates carbon catabolite repression (CCR), and regulates PTS-catalyzed carbohydrate uptake and inducer exclusion. This is HPr kinase/phosphorylase from Staphylococcus epidermidis (strain ATCC 35984 / DSM 28319 / BCRC 17069 / CCUG 31568 / BM 3577 / RP62A).